A 204-amino-acid polypeptide reads, in one-letter code: N-(5'-phosphoribosyl)anthranilate isomerase (204 aa).

The protein belongs to the TrpF family.

It carries out the reaction N-(5-phospho-beta-D-ribosyl)anthranilate = 1-(2-carboxyphenylamino)-1-deoxy-D-ribulose 5-phosphate. It participates in amino-acid biosynthesis; L-tryptophan biosynthesis; L-tryptophan from chorismate: step 3/5. In Bacillus anthracis (strain A0248), this protein is N-(5'-phosphoribosyl)anthranilate isomerase.